Consider the following 717-residue polypeptide: Inhibitor of nuclear factor kappa-B kinase subunit epsilon (717 aa).

The region spanning Trp-9–Ser-315 is the Protein kinase domain. Position 15–23 (Leu-15–Val-23) interacts with ATP. Lys-30 participates in a covalent cross-link: Glycyl lysine isopeptide (Lys-Gly) (interchain with G-Cter in ubiquitin). Lys-38 provides a ligand contact to ATP. The active-site Proton acceptor is the Asp-135. Phosphoserine; by autocatalysis and IKKB is present on Ser-172. Lys-231 is covalently cross-linked (Glycyl lysine isopeptide (Lys-Gly) (interchain with G-Cter in SUMO1)). The interaction with DDX3X stretch occupies residues Ser-385–Asp-650. Lys-403 is covalently cross-linked (Glycyl lysine isopeptide (Lys-Gly) (interchain with G-Cter in ubiquitin)). The interval Leu-452–Ser-473 is leucine-zipper. Position 503 is a phosphothreonine (Thr-503). Ser-665 is subject to Phosphoserine.

The protein belongs to the protein kinase superfamily. Ser/Thr protein kinase family. I-kappa-B kinase subfamily. As to quaternary structure, homodimer. Interacts with MAVS/IPS1. Interacts (via protein kinase domain) with TTLL12 (via N-terminus); the interaction prevents MAVS binding to IKBKE. Interacts with the adapter proteins AZI2/NAP1, TANK and TBKBP1/SINTBAD. Interacts with SIKE1. Interacts with TICAM1/TRIF, IRF3 and RIGI; interactions are disrupted by the interaction between IKBKE and SIKE1. Interacts with TOPORS; induced by DNA damage. Interacts with CYLD, IKBKB, IKBKG and MYD88. Interacts with IFIH1. Interacts with DDX3X; the interaction may be induced upon virus infection. Interacts with TRIM6 (via SPRY box). Interacts with unanchored K48-linked polyubiquitin chains; this leads to IKBKE activation. Interacts with TBK1. Interacts with FKBP5. Post-translationally, sumoylation by TOPORS upon DNA damage is required for protection of cells against DNA damage-induced cell death. Desumoylated by SENP1. In terms of processing, autophosphorylated and phosphorylated by IKBKB/IKKB. Phosphorylation at Ser-172 is enhanced by the interaction with DDX3X. Phosphorylated at Thr-503 upon IFN activation. 'Lys-63'-linked polyubiquitinated at Lys-30 and Lys-403 by TRAF2:BIRC2 and TRAF2:BIRC3 complexes. Ubiquitination is induced by LPS, TNFA and interleukin-1 and required for full kinase activity and KF-kappa-B pathway activation. Expressed in bone marrow-derived macrophages and at low levels in liver and white adipose tissue (at protein level). Detected in muscle and lung.

The protein localises to the cytoplasm. Its subcellular location is the nucleus. The protein resides in the PML body. The catalysed reaction is L-seryl-[I-kappa-B protein] + ATP = O-phospho-L-seryl-[I-kappa-B protein] + ADP + H(+). With respect to regulation, kinase activity is inhibited competitively by amlexanox. In terms of biological role, serine/threonine kinase that plays an essential role in regulating inflammatory responses to viral infection, through the activation of the type I IFN, NF-kappa-B and STAT signaling. Also involved in TNFA and inflammatory cytokines, like Interleukin-1, signaling. Following activation of viral RNA sensors, such as RIG-I-like receptors, associates with DDX3X and phosphorylates interferon regulatory factors (IRFs), IRF3 and IRF7, as well as DDX3X. This activity allows subsequent homodimerization and nuclear translocation of the IRF3 leading to transcriptional activation of pro-inflammatory and antiviral genes including IFNB. In order to establish such an antiviral state, IKBKE forms several different complexes whose composition depends on the type of cell and cellular stimuli. Thus, several scaffolding molecules including IPS1/MAVS, TANK, AZI2/NAP1 or TBKBP1/SINTBAD can be recruited to the IKBKE-containing-complexes. Activated by polyubiquitination in response to TNFA and interleukin-1, regulates the NF-kappa-B signaling pathway through, at least, the phosphorylation of CYLD. Phosphorylates inhibitors of NF-kappa-B thus leading to the dissociation of the inhibitor/NF-kappa-B complex and ultimately the degradation of the inhibitor. In addition, is also required for the induction of a subset of ISGs which displays antiviral activity, may be through the phosphorylation of STAT1 at 'Ser-708'. Phosphorylation of STAT1 at 'Ser-708' also seems to promote the assembly and DNA binding of ISGF3 (STAT1:STAT2:IRF9) complexes compared to GAF (STAT1:STAT1) complexes, in this way regulating the balance between type I and type II IFN responses. Protects cells against DNA damage-induced cell death. Also plays an important role in energy balance regulation by sustaining a state of chronic, low-grade inflammation in obesity, wich leads to a negative impact on insulin sensitivity. Phosphorylates AKT1. This is Inhibitor of nuclear factor kappa-B kinase subunit epsilon (Ikbke) from Mus musculus (Mouse).